We begin with the raw amino-acid sequence, 391 residues long: Phosphoglycerate kinase (391 aa).

Residues 21–23 (DLN), Arg-36, 59–62 (HLGR), Arg-113, and Arg-146 contribute to the substrate site. Residues Lys-197, Glu-319, and 345-348 (GGDT) contribute to the ATP site.

It belongs to the phosphoglycerate kinase family. Monomer.

The protein resides in the cytoplasm. The catalysed reaction is (2R)-3-phosphoglycerate + ATP = (2R)-3-phospho-glyceroyl phosphate + ADP. It functions in the pathway carbohydrate degradation; glycolysis; pyruvate from D-glyceraldehyde 3-phosphate: step 2/5. The sequence is that of Phosphoglycerate kinase from Stenotrophomonas maltophilia (strain R551-3).